The sequence spans 75 residues: Protein RegB (75 aa).

In terms of biological role, required for optimal exotoxin A production. The sequence is that of Protein RegB (regB) from Pseudomonas aeruginosa (strain ATCC 15692 / DSM 22644 / CIP 104116 / JCM 14847 / LMG 12228 / 1C / PRS 101 / PAO1).